The chain runs to 141 residues: HTH-type transcriptional regulator LrpA (141 aa).

The HTH asnC-type domain occupies 2 to 63; it reads VDERDKIILD…KINPKKLGYS (62 aa). The H-T-H motif DNA-binding region spans 21–40; sequence FTEIAKILGISETAVRKRVK.

As to quaternary structure, homooctamer; tetramer of dimers.

Functionally, DNA-binding protein that negatively regulates its own transcription. Interferes with RNA polymerase (RNAP) recruitment by inhibiting the association of RNAP with the TBP-TFB promoter complex. The chain is HTH-type transcriptional regulator LrpA (lrpA) from Pyrococcus abyssi (strain GE5 / Orsay).